A 68-amino-acid chain; its full sequence is Protein SlyX homolog (68 aa).

Belongs to the SlyX family.

This is Protein SlyX homolog from Pseudomonas entomophila (strain L48).